Consider the following 455-residue polypeptide: J protein JJJ2 (455 aa).

Residues 12-76 (TYYSILGVPT…QLRAEYDKKL (65 aa)) enclose the J domain. The disordered stretch occupies residues 104 to 241 (RNSKPYEQQP…RKKSEKKATP (138 aa)). The segment covering 133–144 (NSNPHNENSSNN) has biased composition (low complexity). The segment covering 156–168 (TLSKDSEDKHGTD) has biased composition (basic and acidic residues).

Its subcellular location is the cytoplasm. The protein localises to the nucleus. The chain is J protein JJJ2 (JJJ2) from Candida glabrata (strain ATCC 2001 / BCRC 20586 / JCM 3761 / NBRC 0622 / NRRL Y-65 / CBS 138) (Yeast).